A 545-amino-acid polypeptide reads, in one-letter code: Phenylalanine--tRNA ligase beta subunit (545 aa).

In terms of domain architecture, B5 spans 270-346 (LEPKERLLTT…KGYGYENIKV (77 aa)). Mg(2+) is bound by residues D324, D330, E333, and D334.

The protein belongs to the phenylalanyl-tRNA synthetase beta subunit family. Type 2 subfamily. In terms of assembly, tetramer of two alpha and two beta subunits. Requires Mg(2+) as cofactor.

The protein resides in the cytoplasm. It catalyses the reaction tRNA(Phe) + L-phenylalanine + ATP = L-phenylalanyl-tRNA(Phe) + AMP + diphosphate + H(+). In Methanosarcina acetivorans (strain ATCC 35395 / DSM 2834 / JCM 12185 / C2A), this protein is Phenylalanine--tRNA ligase beta subunit.